The following is a 358-amino-acid chain: Phospho-N-acetylmuramoyl-pentapeptide-transferase (358 aa).

A run of 10 helical transmembrane segments spans residues 27-47 (LFNNFIFIGVFILFFFLSLFA), 81-101 (MGGVFLMIPFFILLLIITINL), 106-126 (LFLLLLTIFGFYITGFLDDYL), 147-167 (VISIIFILLAYEKNLINPLVI), 171-191 (SWVINMNIFILPISFLVLVGI), 201-221 (LDGLAAGCSGIVFYGLGTEIL), 228-248 (LFVFSILCFSMSGLCLGFLKY), 255-275 (IFMGDTGSLSIGATLGTIALL), 278-298 (SVFTLSIFSGIFIIESLSVII), and 336-356 (IVENFWKINILLIILGIVLKI).

The protein belongs to the glycosyltransferase 4 family. MraY subfamily. Mg(2+) is required as a cofactor.

The protein resides in the cell inner membrane. The catalysed reaction is UDP-N-acetyl-alpha-D-muramoyl-L-alanyl-gamma-D-glutamyl-meso-2,6-diaminopimeloyl-D-alanyl-D-alanine + di-trans,octa-cis-undecaprenyl phosphate = di-trans,octa-cis-undecaprenyl diphospho-N-acetyl-alpha-D-muramoyl-L-alanyl-D-glutamyl-meso-2,6-diaminopimeloyl-D-alanyl-D-alanine + UMP. It participates in cell wall biogenesis; peptidoglycan biosynthesis. In terms of biological role, catalyzes the initial step of the lipid cycle reactions in the biosynthesis of the cell wall peptidoglycan: transfers peptidoglycan precursor phospho-MurNAc-pentapeptide from UDP-MurNAc-pentapeptide onto the lipid carrier undecaprenyl phosphate, yielding undecaprenyl-pyrophosphoryl-MurNAc-pentapeptide, known as lipid I. The protein is Phospho-N-acetylmuramoyl-pentapeptide-transferase of Prochlorococcus marinus (strain MIT 9215).